The following is a 313-amino-acid chain: D-alanine--D-alanine ligase (313 aa).

The region spanning 108–308 (KLVWQQTGVP…YSELVVKVLS (201 aa)) is the ATP-grasp domain. 138–193 (VAKLGLPLFVKPASEGSSVAVLKVKTADALPAALAEAATHDKIVIVEKSIEGGGEY) contributes to the ATP binding site. Residues Asp-262, Glu-275, and Asn-277 each contribute to the Mg(2+) site.

Belongs to the D-alanine--D-alanine ligase family. Mg(2+) is required as a cofactor. Mn(2+) serves as cofactor.

Its subcellular location is the cytoplasm. The enzyme catalyses 2 D-alanine + ATP = D-alanyl-D-alanine + ADP + phosphate + H(+). It functions in the pathway cell wall biogenesis; peptidoglycan biosynthesis. Cell wall formation. This Burkholderia orbicola (strain MC0-3) protein is D-alanine--D-alanine ligase.